Reading from the N-terminus, the 280-residue chain is 2-dehydro-3-deoxyphosphooctonate aldolase (280 aa).

This sequence belongs to the KdsA family.

The protein localises to the cytoplasm. It catalyses the reaction D-arabinose 5-phosphate + phosphoenolpyruvate + H2O = 3-deoxy-alpha-D-manno-2-octulosonate-8-phosphate + phosphate. It participates in carbohydrate biosynthesis; 3-deoxy-D-manno-octulosonate biosynthesis; 3-deoxy-D-manno-octulosonate from D-ribulose 5-phosphate: step 2/3. It functions in the pathway bacterial outer membrane biogenesis; lipopolysaccharide biosynthesis. The sequence is that of 2-dehydro-3-deoxyphosphooctonate aldolase from Thiobacillus denitrificans (strain ATCC 25259 / T1).